We begin with the raw amino-acid sequence, 627 residues long: 5-aminolevulinate synthase, non-specific, mitochondrial (627 aa).

The transit peptide at methionine 1–serine 58 directs the protein to the mitochondrion. Substrate contacts are provided by arginine 204, serine 321, and lysine 340. The pyridoxal 5'-phosphate site is built by serine 373, histidine 401, and threonine 429. Lysine 432 is an active-site residue. N6-(pyridoxal phosphate)lysine is present on lysine 432. Pyridoxal 5'-phosphate contacts are provided by threonine 461 and threonine 462. Residue threonine 549 coordinates substrate.

This sequence belongs to the class-II pyridoxal-phosphate-dependent aminotransferase family. Homodimer. It depends on pyridoxal 5'-phosphate as a cofactor.

It is found in the mitochondrion inner membrane. The catalysed reaction is succinyl-CoA + glycine + H(+) = 5-aminolevulinate + CO2 + CoA. It participates in porphyrin-containing compound metabolism; protoporphyrin-IX biosynthesis; 5-aminolevulinate from glycine: step 1/1. Functionally, catalyzes the pyridoxal 5'-phosphate (PLP)-dependent condensation of succinyl-CoA and glycine to form aminolevulinic acid (ALA), with CoA and CO2 as by-products. The polypeptide is 5-aminolevulinate synthase, non-specific, mitochondrial (alas1) (Opsanus tau (Oyster toadfish)).